The following is a 169-amino-acid chain: Protein AIG2 B (169 aa).

15 to 20 (YGSFQE) is a substrate binding site. Glutamate 83 acts as the Proton acceptor in catalysis.

The protein belongs to the gamma-glutamylcyclotransferase family. Expressed in roots, leaves and stems.

Functionally, putative gamma-glutamylcyclotransferase. This Arabidopsis thaliana (Mouse-ear cress) protein is Protein AIG2 B.